The following is a 227-amino-acid chain: UPF0758 protein llmg_1515 (227 aa).

Residues 103-225 (QVLSSKEYGM…YYSFRERDSN (123 aa)) enclose the MPN domain. Residues His174, His176, and Asp187 each contribute to the Zn(2+) site. The JAMM motif signature appears at 174-187 (HNHPSGNLQPSQAD).

This sequence belongs to the UPF0758 family.

The protein is UPF0758 protein llmg_1515 of Lactococcus lactis subsp. cremoris (strain MG1363).